Reading from the N-terminus, the 211-residue chain is Thiamine-phosphate synthase (211 aa).

Residues 37 to 41 and Asn69 contribute to the 4-amino-2-methyl-5-(diphosphooxymethyl)pyrimidine site; that span reads QLRIK. Mg(2+) contacts are provided by Asp70 and Asp89. Position 108 (Ser108) interacts with 4-amino-2-methyl-5-(diphosphooxymethyl)pyrimidine. 134–136 contacts 2-[(2R,5Z)-2-carboxy-4-methylthiazol-5(2H)-ylidene]ethyl phosphate; it reads TQT. A 4-amino-2-methyl-5-(diphosphooxymethyl)pyrimidine-binding site is contributed by Lys137. 2-[(2R,5Z)-2-carboxy-4-methylthiazol-5(2H)-ylidene]ethyl phosphate contacts are provided by residues Gly166 and 186 to 187; that span reads VS.

The protein belongs to the thiamine-phosphate synthase family. The cofactor is Mg(2+).

It carries out the reaction 2-[(2R,5Z)-2-carboxy-4-methylthiazol-5(2H)-ylidene]ethyl phosphate + 4-amino-2-methyl-5-(diphosphooxymethyl)pyrimidine + 2 H(+) = thiamine phosphate + CO2 + diphosphate. It catalyses the reaction 2-(2-carboxy-4-methylthiazol-5-yl)ethyl phosphate + 4-amino-2-methyl-5-(diphosphooxymethyl)pyrimidine + 2 H(+) = thiamine phosphate + CO2 + diphosphate. The catalysed reaction is 4-methyl-5-(2-phosphooxyethyl)-thiazole + 4-amino-2-methyl-5-(diphosphooxymethyl)pyrimidine + H(+) = thiamine phosphate + diphosphate. The protein operates within cofactor biosynthesis; thiamine diphosphate biosynthesis; thiamine phosphate from 4-amino-2-methyl-5-diphosphomethylpyrimidine and 4-methyl-5-(2-phosphoethyl)-thiazole: step 1/1. Functionally, condenses 4-methyl-5-(beta-hydroxyethyl)thiazole monophosphate (THZ-P) and 2-methyl-4-amino-5-hydroxymethyl pyrimidine pyrophosphate (HMP-PP) to form thiamine monophosphate (TMP). The sequence is that of Thiamine-phosphate synthase from Shigella dysenteriae serotype 1 (strain Sd197).